Consider the following 569-residue polypeptide: 2-succinyl-5-enolpyruvyl-6-hydroxy-3-cyclohexene-1-carboxylate synthase (569 aa).

Belongs to the TPP enzyme family. MenD subfamily. As to quaternary structure, homodimer. It depends on Mg(2+) as a cofactor. Mn(2+) is required as a cofactor. Thiamine diphosphate serves as cofactor.

It carries out the reaction isochorismate + 2-oxoglutarate + H(+) = 5-enolpyruvoyl-6-hydroxy-2-succinyl-cyclohex-3-ene-1-carboxylate + CO2. It participates in quinol/quinone metabolism; 1,4-dihydroxy-2-naphthoate biosynthesis; 1,4-dihydroxy-2-naphthoate from chorismate: step 2/7. The protein operates within quinol/quinone metabolism; menaquinone biosynthesis. Its function is as follows. Catalyzes the thiamine diphosphate-dependent decarboxylation of 2-oxoglutarate and the subsequent addition of the resulting succinic semialdehyde-thiamine pyrophosphate anion to isochorismate to yield 2-succinyl-5-enolpyruvyl-6-hydroxy-3-cyclohexene-1-carboxylate (SEPHCHC). This is 2-succinyl-5-enolpyruvyl-6-hydroxy-3-cyclohexene-1-carboxylate synthase from Shewanella halifaxensis (strain HAW-EB4).